The primary structure comprises 232 residues: LexA repressor (232 aa).

A DNA-binding region (H-T-H motif) is located at residues Ile-36–Lys-56. A compositionally biased stretch (basic and acidic residues) spans Gly-62–Thr-86. The segment at Gly-62–Ala-107 is disordered. Residues Ser-156 and Lys-193 each act as for autocatalytic cleavage activity in the active site.

The protein belongs to the peptidase S24 family. As to quaternary structure, homodimer.

It catalyses the reaction Hydrolysis of Ala-|-Gly bond in repressor LexA.. Represses a number of genes involved in the response to DNA damage (SOS response), including recA and lexA. In the presence of single-stranded DNA, RecA interacts with LexA causing an autocatalytic cleavage which disrupts the DNA-binding part of LexA, leading to derepression of the SOS regulon and eventually DNA repair. In Corynebacterium efficiens (strain DSM 44549 / YS-314 / AJ 12310 / JCM 11189 / NBRC 100395), this protein is LexA repressor.